The chain runs to 1073 residues: Probable lipase MIL1 (1073 aa).

Disordered regions lie at residues M1–S151 and L163–N190. Basic and acidic residues-rich tracts occupy residues Q54 to K81 and G101 to D121. Residues W143–P147 carry the APM2-interacting WQEMP motif motif. N-linked (GlcNAc...) asparagine glycosylation is found at N190, N229, and N236. The disordered stretch occupies residues S230–V267. Over residues T233 to E249 the composition is skewed to low complexity. Acidic residues predominate over residues N252–V267. An N-linked (GlcNAc...) asparagine glycan is attached at N280. The helical transmembrane segment at F292–L312 threads the bilayer. The segment at N385–P448 is disordered. Residues R404 to P427 are compositionally biased toward polar residues. Residue N411 is glycosylated (N-linked (GlcNAc...) asparagine). At S435 the chain carries Phosphoserine. A helical membrane pass occupies residues L457–S477. The N-linked (GlcNAc...) asparagine glycan is linked to N495. 2 helical membrane-spanning segments follow: residues L553–G573 and I577–V597. The N-linked (GlcNAc...) asparagine glycan is linked to N726. Residues W818–S838 form a helical membrane-spanning segment. Residue N850 is glycosylated (N-linked (GlcNAc...) asparagine). Disordered stretches follow at residues G942 to A968 and K1010 to I1073. A compositionally biased stretch (pro residues) spans P1027 to S1037. S1037 carries the phosphoserine modification.

This sequence belongs to the TMCO4 family. Interacts with RPP0. Interacts with APM2.

The protein resides in the golgi apparatus membrane. It is found in the early endosome membrane. The protein localises to the cytoplasmic vesicle. It localises to the clathrin-coated vesicle membrane. In terms of biological role, probable lipase that recruits the AP-1-related (AP-1R) complex to membranes via interaction with APM2. The AP-1R complex is an adapter protein complex that mediates of cargo protein SNC1 sorting in clathrin-coated vesicles. In Saccharomyces cerevisiae (strain ATCC 204508 / S288c) (Baker's yeast), this protein is Probable lipase MIL1.